A 354-amino-acid polypeptide reads, in one-letter code: Glycerol-3-phosphate dehydrogenase [NAD(+)], glycosomal (354 aa).

NAD(+) is bound by residues 15–20 (GSGAFG), F90, K118, and A150. K118 lines the substrate pocket. K203 acts as the Proton acceptor in catalysis. NAD(+) contacts are provided by R267 and E293. 267–268 (RN) contacts substrate. The short motif at 352-354 (SKM) is the Microbody targeting signal element.

It belongs to the NAD-dependent glycerol-3-phosphate dehydrogenase family.

The protein localises to the glycosome. It catalyses the reaction sn-glycerol 3-phosphate + NAD(+) = dihydroxyacetone phosphate + NADH + H(+). This Trypanosoma brucei rhodesiense protein is Glycerol-3-phosphate dehydrogenase [NAD(+)], glycosomal (GPD).